Here is a 531-residue protein sequence, read N- to C-terminus: NADH-quinone oxidoreductase subunit N (531 aa).

14 consecutive transmembrane segments (helical) span residues 8–28 (VEYF…AGVL), 41–61 (AQVT…IVVA), 81–101 (ATLF…VFMA), 146–166 (GATQ…MMVF), 172–192 (LLTM…MCGL), 208–228 (FLLG…LYGA), 250–270 (ALAG…AVPF), 282–302 (PTPI…GALL), 318–338 (PVLW…AVNQ), 350–370 (VAHV…GLSA), 372–392 (LFYL…VGLV), 418–438 (IVGV…LTSG), 453–473 (GAVP…YFYV), and 500–520 (AAIA…QPVL).

It belongs to the complex I subunit 2 family. As to quaternary structure, NDH-1 is composed of 14 different subunits. Subunits NuoA, H, J, K, L, M, N constitute the membrane sector of the complex.

It is found in the cell membrane. It carries out the reaction a quinone + NADH + 5 H(+)(in) = a quinol + NAD(+) + 4 H(+)(out). Its function is as follows. NDH-1 shuttles electrons from NADH, via FMN and iron-sulfur (Fe-S) centers, to quinones in the respiratory chain. The immediate electron acceptor for the enzyme in this species is believed to be a menaquinone. Couples the redox reaction to proton translocation (for every two electrons transferred, four hydrogen ions are translocated across the cytoplasmic membrane), and thus conserves the redox energy in a proton gradient. In Mycobacterium tuberculosis (strain CDC 1551 / Oshkosh), this protein is NADH-quinone oxidoreductase subunit N.